A 410-amino-acid polypeptide reads, in one-letter code: Lipid droplet-regulating VLDL assembly factor AUP1 (410 aa).

Residue Met1 is modified to N-acetylmethionine. The Cytoplasmic portion of the chain corresponds to 1–20 (MEPPPAPGPERLFDSHRLPS). An intramembrane segment occupies 21-41 (DGFLLLALLLYAPVGLCLLVL). The Cytoplasmic portion of the chain corresponds to 42–410 (RLFLGLHVFL…FRERQAQEAE (369 aa)). Residues 258-295 (RLTPADKAEHMKRQRHPRLRPQSVQSSFPSPPSPSSDV) form a disordered region. The residue at position 292 (Ser292) is a Phosphoserine. Positions 296–338 (QLTTLAHRVKEVLPHVPLNVIQRDLARTGCVDLTITNLLEGAV) constitute a CUE domain. A disordered region spans residues 344-369 (DVTEGSQSPPAPSAPKFPSSGLATPQ). Ser363 carries the post-translational modification Phosphoserine. Thr367 bears the Phosphothreonine mark.

This sequence belongs to the AUP1 family. Identified in a complex that contains SEL1L, OS9, FAF2/UBXD8, UBE2J1/UBC6E and AUP1. Interacts with the cytoplasmic tail of ITGA2B, ITGA1, ITGA2, ITGA5, ITGAV and ITGAM. Interacts (via C-terminus) with UBE2G2; the interaction recruits UBE2G2 to lipid droplets. Interacts with ubiquitin ligases AMFR/gp78 and RNF139/TRC8; this promotes interaction of UBE2G2 with AMFR and RNF139. Interacts with apolipoprotein APOB. In terms of processing, monoubiquitinated and diubiquitinated. Ubiquitous.

It is found in the endoplasmic reticulum membrane. The protein resides in the lipid droplet. In terms of biological role, plays a role in the translocation of terminally misfolded proteins from the endoplasmic reticulum lumen to the cytoplasm and their degradation by the proteasome. Plays a role in lipid droplet formation. Induces lipid droplet clustering. Recruits ubiquitin-conjugating enzyme UBE2G2 to lipid droplets which facilitates its interaction with ubiquitin ligases AMFR/gp78 and RNF139/TRC8, leading to sterol-induced ubiquitination of HMGCR and its subsequent proteasomal degradation. Also required for the degradation of INSIG1, SREBF1 and SREBF2. Plays a role in regulating assembly and secretion of very low density lipoprotein particles and stability of apolipoprotein APOB. This chain is Lipid droplet-regulating VLDL assembly factor AUP1, found in Mus musculus (Mouse).